The sequence spans 283 residues: Movement protein (283 aa).

This sequence belongs to the tenuiviruses pc4 protein family.

Its function is as follows. Transports viral genome to neighboring plant cells directly through plasmosdesmata, without any budding. The movement protein allows efficient cell to cell propagation, by bypassing the host cell wall barrier. The sequence is that of Movement protein from Maize stripe virus (MStV).